Reading from the N-terminus, the 277-residue chain is Glutamate racemase (277 aa).

Residues 25–26 (DS) and 57–58 (YG) contribute to the substrate site. Residue Cys89 is the Proton donor/acceptor of the active site. Position 90–91 (90–91 (NT)) interacts with substrate. Residue Cys204 is the Proton donor/acceptor of the active site. 205–206 (TH) is a binding site for substrate.

This sequence belongs to the aspartate/glutamate racemases family.

It catalyses the reaction L-glutamate = D-glutamate. Its pathway is cell wall biogenesis; peptidoglycan biosynthesis. Functionally, provides the (R)-glutamate required for cell wall biosynthesis. In Brucella ovis (strain ATCC 25840 / 63/290 / NCTC 10512), this protein is Glutamate racemase.